We begin with the raw amino-acid sequence, 365 residues long: Putative agmatine deiminase (365 aa).

C357 functions as the Amidino-cysteine intermediate in the catalytic mechanism.

It belongs to the agmatine deiminase family.

It carries out the reaction agmatine + H2O = N-carbamoylputrescine + NH4(+). This chain is Putative agmatine deiminase, found in Yersinia pseudotuberculosis serotype O:1b (strain IP 31758).